The following is a 127-amino-acid chain: Large ribosomal subunit protein uL18 (127 aa).

It belongs to the universal ribosomal protein uL18 family. As to quaternary structure, part of the 50S ribosomal subunit; part of the 5S rRNA/L5/L18/L25 subcomplex. Contacts the 5S and 23S rRNAs.

In terms of biological role, this is one of the proteins that bind and probably mediate the attachment of the 5S RNA into the large ribosomal subunit, where it forms part of the central protuberance. The sequence is that of Large ribosomal subunit protein uL18 from Streptomyces coelicolor (strain ATCC BAA-471 / A3(2) / M145).